The following is a 399-amino-acid chain: A-type ATP synthase subunit C (399 aa).

It belongs to the V-ATPase V0D/AC39 subunit family. The A-type ATPase is composed of subunits A(3), B(3), C, D, E(1 or 2), F, H(2), I and K(x).

The protein resides in the cell membrane. Its function is as follows. Component of the A-type ATP synthase that produces ATP from ADP in the presence of a proton gradient across the membrane. The polypeptide is A-type ATP synthase subunit C (Methanocaldococcus jannaschii (strain ATCC 43067 / DSM 2661 / JAL-1 / JCM 10045 / NBRC 100440) (Methanococcus jannaschii)).